Here is a 147-residue protein sequence, read N- to C-terminus: Large ribosomal subunit protein bL9 (147 aa).

This sequence belongs to the bacterial ribosomal protein bL9 family.

Functionally, binds to the 23S rRNA. The protein is Large ribosomal subunit protein bL9 of Clostridium novyi (strain NT).